A 458-amino-acid polypeptide reads, in one-letter code: N-acetylgalactosamine kinase (458 aa).

Residues R43, E49, H50, and D52 each coordinate alpha-D-galactose. Residues G143, S145, and S146 each coordinate ATP. D190 contributes to the alpha-D-galactose binding site. Catalysis depends on D190, which acts as the Proton acceptor. Positions 233 and 234 each coordinate ATP.

It belongs to the GHMP kinase family. GalK subfamily. In terms of assembly, monomer.

It carries out the reaction N-acetyl-alpha-D-galactosamine + ATP = N-acetyl-alpha-D-galactosamine 1-phosphate + ADP + H(+). Its function is as follows. Acts on GalNAc. Also acts as a galactokinase when galactose is present at high concentrations. May be involved in a salvage pathway for the reutilization of free GalNAc derived from the degradation of complex carbohydrates. The chain is N-acetylgalactosamine kinase (GALK2) from Homo sapiens (Human).